We begin with the raw amino-acid sequence, 28 residues long: Omega-agatoxin-Aa2a (28 aa).

It belongs to the neurotoxin 04 (omega-agtx) family. 03 (type II/III omega-agtx) subfamily. As to expression, expressed by the venom gland.

The protein localises to the secreted. Functionally, omega-agatoxin are antagonist of voltage-gated calcium channels. They block insect neuromuscular transmission presynaptically. Potent blocker of N-type calcium channels (Cav2.2/CACNA1B). This is Omega-agatoxin-Aa2a from Agelenopsis aperta (North American funnel-web spider).